Here is a 100-residue protein sequence, read N- to C-terminus: uncharacterized protein (100 aa).

Residues 65–91 show a composition bias toward basic and acidic residues; sequence DDRERHLSATGERRREQGFGTSRRKDP. Residues 65-100 form a disordered region; sequence DDRERHLSATGERRREQGFGTSRRKDPSLYNWSDVK.

Belongs to the chlamydial CPn_0121/CT_031/TC_0300 family.

This is an uncharacterized protein from Chlamydia trachomatis serovar D (strain ATCC VR-885 / DSM 19411 / UW-3/Cx).